Reading from the N-terminus, the 310-residue chain is Tagatose-6-phosphate kinase (310 aa).

The protein belongs to the carbohydrate kinase PfkB family. LacC subfamily.

The catalysed reaction is D-tagatofuranose 6-phosphate + ATP = D-tagatofuranose 1,6-bisphosphate + ADP + H(+). It functions in the pathway carbohydrate metabolism; D-tagatose 6-phosphate degradation; D-glyceraldehyde 3-phosphate and glycerone phosphate from D-tagatose 6-phosphate: step 1/2. This chain is Tagatose-6-phosphate kinase, found in Staphylococcus aureus (strain MRSA252).